The primary structure comprises 98 residues: NADH-ubiquinone oxidoreductase chain 4L (98 aa).

3 consecutive transmembrane segments (helical) span residues 1–21 (MSMV…GLLM), 29–49 (SLLC…MVVL), and 61–81 (IILL…LVMV).

It belongs to the complex I subunit 4L family. As to quaternary structure, core subunit of respiratory chain NADH dehydrogenase (Complex I) which is composed of 45 different subunits.

Its subcellular location is the mitochondrion inner membrane. It carries out the reaction a ubiquinone + NADH + 5 H(+)(in) = a ubiquinol + NAD(+) + 4 H(+)(out). Core subunit of the mitochondrial membrane respiratory chain NADH dehydrogenase (Complex I) which catalyzes electron transfer from NADH through the respiratory chain, using ubiquinone as an electron acceptor. Part of the enzyme membrane arm which is embedded in the lipid bilayer and involved in proton translocation. The chain is NADH-ubiquinone oxidoreductase chain 4L (MT-ND4L) from Acinonyx jubatus (Cheetah).